A 436-amino-acid polypeptide reads, in one-letter code: Glutamyl-tRNA reductase (436 aa).

Residues 49 to 52 (TCNR), Ser-109, 114 to 116 (EGQ), and Gln-120 each bind substrate. The active-site Nucleophile is the Cys-50. Residue 198 to 203 (GAGRMS) participates in NADP(+) binding.

This sequence belongs to the glutamyl-tRNA reductase family. As to quaternary structure, homodimer.

The catalysed reaction is (S)-4-amino-5-oxopentanoate + tRNA(Glu) + NADP(+) = L-glutamyl-tRNA(Glu) + NADPH + H(+). The protein operates within porphyrin-containing compound metabolism; protoporphyrin-IX biosynthesis; 5-aminolevulinate from L-glutamyl-tRNA(Glu): step 1/2. It participates in porphyrin-containing compound metabolism; chlorophyll biosynthesis. Its function is as follows. Catalyzes the NADPH-dependent reduction of glutamyl-tRNA(Glu) to glutamate 1-semialdehyde (GSA). The chain is Glutamyl-tRNA reductase from Prochlorococcus marinus (strain MIT 9215).